The sequence spans 783 residues: Flavin carrier protein 2 (783 aa).

A signal peptide spans 1–22 (MIFLNTFARCLLTCFVLCSGTA). Residues 23 to 182 (RSSDTNDTTP…NGKTVQTKYA (160 aa)) lie on the Lumenal side of the membrane. Asn28, Asn65, Asn81, and Asn156 each carry an N-linked (GlcNAc...) asparagine glycan. A helical transmembrane segment spans residues 183 to 203 (AWPIAAISGVGVLTSGFVSVI). Residues 204-211 (GYSATAAH) are Cytoplasmic-facing. A helical transmembrane segment spans residues 212–232 (IASNSISLFIYFQNLAITAMM). At 233–347 (GVSRVPPIAA…AYLANIELSN (115 aa)) the chain is on the lumenal side. An N-linked (GlcNAc...) asparagine glycan is attached at Asn323. A helical transmembrane segment spans residues 348 to 368 (FFLTGIVFFLFFLFVVVVSLI). The Cytoplasmic segment spans residues 369–402 (FFKALLEVLTRARILKETSNFFQYRKNWGSIIKG). Residues 403–423 (TLFRLSIIAFPQVSLLAIWEF) traverse the membrane as a helical segment. Residues 424–430 (TQVNSPA) lie on the Lumenal side of the membrane. A helical membrane pass occupies residues 431-451 (IVVDAVVILLIITGLLVYGTI). At 452 to 492 (RVFIKGRESLRLYKNPAYLLYSDTYFLNKFGFLYVQFKADK) the chain is on the cytoplasmic side. A helical membrane pass occupies residues 493 to 513 (FWWLLPLLSYAFLRSLFVAVL). Residues 514 to 521 (QNQGKAQA) lie on the Lumenal side of the membrane. A helical membrane pass occupies residues 522-542 (MIIFVIELAYFVCLCWIRPYL). Residues 543 to 547 (DKRTN) lie on the Cytoplasmic side of the membrane. The chain crosses the membrane as a helical span at residues 548–568 (VFNIAIHLVNLINAFFFLFFS). The Lumenal portion of the chain corresponds to 569–581 (NLFKQPAVVSSVM). The chain crosses the membrane as a helical span at residues 582–602 (AVILFVLNAVFALFLLLFTIV). Topologically, residues 603–783 (TCTLALLHRN…ENARNNNPYL (181 aa)) are cytoplasmic. Positions 681 to 783 (RLFDDETSSS…ENARNNNPYL (103 aa)) are disordered. Low complexity predominate over residues 688–697 (SSSSFKQNSS). Polar residues-rich tracts occupy residues 704–748 (VTEQ…TSSL) and 756–767 (YLGNSNKSYSHF). Residues 768–783 (NNNGSNENARNNNPYL) are compositionally biased toward low complexity.

This sequence belongs to the transient receptor potential (TRP) ion channel family.

The protein resides in the endoplasmic reticulum membrane. May be responsible for the transport of FAD into the endoplasmic reticulum lumen, where it is required for oxidative protein folding. In Saccharomyces cerevisiae (strain ATCC 204508 / S288c) (Baker's yeast), this protein is Flavin carrier protein 2 (FLC2).